Consider the following 363-residue polypeptide: Adenosine deaminase (363 aa).

Positions 42 and 44 each coordinate Zn(2+). Residues 44–46 (HLD), D172, and G201 each bind a purine D-ribonucleoside. The segment at 170 to 184 (IGDTGHEAANIKASA) is gating helix loop; regulates binding affinity for substrates and thus substrate selectivity. H226 lines the Zn(2+) pocket. E229, H253, and D310 together coordinate a purine D-ribonucleoside. D310 contacts Zn(2+).

The protein belongs to the metallo-dependent hydrolases superfamily. Adenosine and AMP deaminases family. Requires Zn(2+) as cofactor.

The catalysed reaction is adenosine + H2O + H(+) = inosine + NH4(+). It carries out the reaction S-methyl-5'-thioadenosine + H2O + H(+) = S-methyl-5'-thioinosine + NH4(+). Its pathway is purine metabolism; purine nucleoside salvage. With respect to regulation, inhibited by coformycin and methylthiocoformycin (MT-coformycin). Catalyzes the hydrolytic deamination of adenosine to produce inosine. Unlike mammalian adenosine deaminases, also catalyzes the deamination of 5'-methylthioadenosine (MTA), a by-product of polyamine biosynthesis, to produce 5'-methylthioinosine (MTI). Plays an essential role in the purine salvage pathway which allows the parasite to use host cell purines for the synthesis of nucleic acids. The polypeptide is Adenosine deaminase (Plasmodium cynomolgi (strain B)).